Reading from the N-terminus, the 330-residue chain is Anthranilate phosphoribosyltransferase (330 aa).

5-phospho-alpha-D-ribose 1-diphosphate contacts are provided by residues glycine 75, 78-79 (GD), threonine 83, 85-88 (NVST), 103-111 (KHGNRAASS), and alanine 115. Residue glycine 75 participates in anthranilate binding. Mg(2+) is bound at residue serine 87. Asparagine 106 is a binding site for anthranilate. Anthranilate is bound at residue arginine 161. The Mg(2+) site is built by aspartate 220 and glutamate 221.

This sequence belongs to the anthranilate phosphoribosyltransferase family. As to quaternary structure, homodimer. Requires Mg(2+) as cofactor.

The catalysed reaction is N-(5-phospho-beta-D-ribosyl)anthranilate + diphosphate = 5-phospho-alpha-D-ribose 1-diphosphate + anthranilate. It participates in amino-acid biosynthesis; L-tryptophan biosynthesis; L-tryptophan from chorismate: step 2/5. Its function is as follows. Catalyzes the transfer of the phosphoribosyl group of 5-phosphorylribose-1-pyrophosphate (PRPP) to anthranilate to yield N-(5'-phosphoribosyl)-anthranilate (PRA). The sequence is that of Anthranilate phosphoribosyltransferase from Novosphingobium aromaticivorans (strain ATCC 700278 / DSM 12444 / CCUG 56034 / CIP 105152 / NBRC 16084 / F199).